The following is a 117-amino-acid chain: Ig heavy chain V region 102 (117 aa).

The signal sequence occupies residues 1–19; it reads MGWSCIILFLVATATGVHS. The framework-1 stretch occupies residues 20–49; it reads HVQLQQPGAELVKPGASVKVSCKASGYTFT. The cysteines at positions 41 and 115 are disulfide-linked. The segment at 50–54 is complementarity-determining-1; it reads SYWMH. The framework-2 stretch occupies residues 55 to 68; that stretch reads WVKQRPGQGLEWIG. Residues 69 to 85 are complementarity-determining-2; that stretch reads RIHPSDSDTNYNQKFKG. Residues 86-117 are framework-3; sequence KATLTVDKSSSTAYMQLSSLTSEDSAVYYCAI.

The protein is Ig heavy chain V region 102 of Mus musculus (Mouse).